The primary structure comprises 53 residues: uncharacterized protein (53 aa).

The tract at residues Arg-34–Arg-53 is disordered.

This is an uncharacterized protein from Treponema pallidum (strain Nichols).